The primary structure comprises 472 residues: 4-O-methyl-glucuronoyl methylesterase 1 (472 aa).

An N-terminal signal peptide occupies residues 1 to 20 (MKSAAYLAALAAVLPAYVNA). The 36-residue stretch at 21–56 (QAQEWGQCGGIGWTGATTCVSGTVCTVLNPYYSQCL) folds into the CBM1 domain. The disordered stretch occupies residues 62 to 97 (TAPPPPPPPPTSVSSSSSSSTSSAPPSGPSGTSPTC). Pro residues predominate over residues 63–72 (APPPPPPPPT). The span at 73–96 (SVSSSSSSSTSSAPPSGPSGTSPT) shows a compositional bias: low complexity. Intrachain disulfides connect C97-C131, C283-C419, and C315-C391. Positions 282–287 (GCSRDG) match the GXSYXG catalytic site motif motif. The active-site Nucleophile is the S284. Positions 288, 330, 338, and 382 each coordinate substrate. Residue H418 is the Proton donor/acceptor of the active site. N-linked (GlcNAc...) asparagine glycosylation occurs at N465.

Belongs to the carbohydrate esterase 15 (CE15) family.

It localises to the secreted. It catalyses the reaction a 4-O-methyl-alpha-D-glucuronosyl ester derivative + H2O = 4-O-methyl-alpha-D-glucuronate derivative + an alcohol + H(+). Its function is as follows. Glucuronoyl esterase which may play a significant role in biomass degradation, as it is considered to disconnect hemicellulose from lignin through the hydrolysis of the ester bond between 4-O-methyl-D-glucuronic acid residues of glucuronoxylans and aromatic alcohols of lignin. Can hydrolyze benzyl glucuronic acid (BnGlcA), allyl glucuronic acid (allylGlcA) and to a lower degree methyl glucuronic acid (MeGlcA) in vitro. This Phanerochaete chrysosporium (strain RP-78 / ATCC MYA-4764 / FGSC 9002) (White-rot fungus) protein is 4-O-methyl-glucuronoyl methylesterase 1.